The following is a 114-amino-acid chain: Non-specific lipid-transfer protein 1 (114 aa).

The N-terminal stretch at 1–23 is a signal peptide; it reads MEIAGKIACFVVLCMVVAAPCAE. Cystine bridges form between Cys27/Cys73, Cys37/Cys50, Cys51/Cys96, and Cys71/Cys110.

The protein belongs to the plant LTP family. As to expression, high expression in leaf epidermis and shoot apex, and also in root epidermis during seedling germination.

Its function is as follows. Plant non-specific lipid-transfer proteins transfer phospholipids as well as galactolipids across membranes. Binds cis-unsaturated fatty acids and jasmonic acid with a higher affinity than linear chain fatty acids. Formation of the complex with jasmonic acid results in a conformational change facilitating the LPT1 binding on the elicitin plasma membrane receptor that is known to be involved in plant defense induction. May also play a role in wax or cutin deposition in the cell walls of expanding epidermal cells and certain secretory tissues. The protein is Non-specific lipid-transfer protein 1 (LTP1) of Nicotiana tabacum (Common tobacco).